The following is a 579-amino-acid chain: Folliculin (579 aa).

Residues 32–82 (GAGSGDGAGRGEPADEEEGGIQMSSRIRAHSPAEGASAESSSPGPKKSDMC) are disordered. 2 positions are modified to phosphoserine: serine 62 and serine 73. A compositionally biased stretch (low complexity) spans 63 to 76 (PAEGASAESSSPGP). One can recognise a uDENN FLCN/SMCR8-type domain in the interval 86–242 (RSLAAGHPGY…RNGNAARSLT (157 aa)). Positions 285-309 (QMEQLAELEEESESWDNSEAEEEEK) form a coiled coil. The segment covering 294–308 (EESESWDNSEAEEEE) has biased composition (acidic residues). The tract at residues 294 to 321 (EESESWDNSEAEEEEKGPALPEGAEGRE) is disordered. 5 positions are modified to phosphoserine: serine 302, serine 406, serine 537, serine 542, and serine 571. Residues 339–491 (QPRKLSVFKS…ILNKMEAALT (153 aa)) enclose the cDENN FLCN/SMCR8-type domain. The 66-residue stretch at 493 to 558 (QNLSVDVVDQ…LLKFWMTGLS (66 aa)) folds into the dDENN FLCN/SMCR8-type domain.

Belongs to the folliculin family. As to quaternary structure, interacts (via C-terminus) with FNIP1 or FNIP2 (via C-terminus). Component of the lysosomal folliculin complex (LFC), composed of FLCN, FNIP1 (or FNIP2), RagA/RRAGA or RagB/RRAGB GDP-bound, RagC/RRAGC or RagD/RRAGD GTP-bound, and Ragulator. Interaction with FNIP1 or FNIP2 mediates indirect interaction with the PRKAA1, PRKAB1 and PRKAG1 subunits of 5'-AMP-activated protein kinase (AMPK). Interacts with HSP90AA1 in the presence of FNIP1. Interacts with HSP70, STUB1, CDC37, AHSA1, CCT2, STIP1, PTGES3 and PPP5C. Interacts with GABARAP; interaction takes place in the presence of FNIP1 and/or FNIP2. Interacts with RILP; the interaction is direct and promotes association between RILP and RAB34. Interacts with KIF3A and KIF3B. Interacts with lactate dehydrogenase LDHA, but not LDHB; the interaction is direct, may preferentially bind LDHA dimers rather than tetramers, and regulates LDHA activity, acting as an uncompetitive inhibitor. Phosphorylation by ULK1 modulates the interaction with GABARAP and is required to regulate autophagy.

It is found in the lysosome membrane. It localises to the cytoplasm. Its subcellular location is the cytosol. The protein localises to the cell projection. The protein resides in the cilium. It is found in the cytoskeleton. It localises to the microtubule organizing center. Its subcellular location is the centrosome. The protein localises to the spindle. The protein resides in the nucleus. GTPase-activating activity is inhibited in the folliculin complex (LFC), which stabilizes the GDP-bound state of RagA/RRAGA (or RagB/RRAGB), because Arg-164 is located far from the RagC/RRAGC or RagD/RRAGD nucleotide pocket. Disassembly of the LFC complex upon amino acid restimulation liberates the GTPase-activating activity. In terms of biological role, multi-functional protein, involved in both the cellular response to amino acid availability and in the regulation of glycolysis. GTPase-activating protein that plays a key role in the cellular response to amino acid availability through regulation of the non-canonical mTORC1 signaling cascade controlling the MiT/TFE factors TFEB and TFE3. Activates mTORC1 by acting as a GTPase-activating protein: specifically stimulates GTP hydrolysis by RagC/RRAGC or RagD/RRAGD, promoting the conversion to the GDP-bound state of RagC/RRAGC or RagD/RRAGD, and thereby activating the kinase activity of mTORC1. The GTPase-activating activity is inhibited during starvation and activated in presence of nutrients. Acts as a key component for non-canonical mTORC1-dependent control of the MiT/TFE factors TFEB and TFE3, while it is not involved in mTORC1-dependent phosphorylation of canonical RPS6KB1/S6K1 and EIF4EBP1/4E-BP1. In low-amino acid conditions, the lysosomal folliculin complex (LFC) is formed on the membrane of lysosomes, which inhibits the GTPase-activating activity of FLCN, inactivates mTORC1 and maximizes nuclear translocation of TFEB and TFE3. Upon amino acid restimulation, RagA/RRAGA (or RagB/RRAGB) nucleotide exchange promotes disassembly of the LFC complex and liberates the GTPase-activating activity of FLCN, leading to activation of mTORC1 and subsequent cytoplasmic retention of TFEB and TFE3. Indirectly acts as a positive regulator of Wnt signaling by promoting mTOR-dependent cytoplasmic retention of MiT/TFE factor TFE3. Required for the exit of hematopoietic stem cell from pluripotency by promoting mTOR-dependent cytoplasmic retention of TFE3, thereby increasing Wnt signaling. Involved in the control of embryonic stem cells differentiation; together with LAMTOR1 it is necessary to recruit and activate RagC/RRAGC and RagD/RRAGD at the lysosomes, and to induce exit of embryonic stem cells from pluripotency via non-canonical, mTOR-independent TFE3 inactivation. Acts as an inhibitor of browning of adipose tissue by regulating mTOR-dependent cytoplasmic retention of TFE3. In response to flow stress, regulates STK11/LKB1 accumulation and mTORC1 activation through primary cilia: may act by recruiting STK11/LKB1 to primary cilia for activation of AMPK resided at basal bodies, causing mTORC1 down-regulation. Together with FNIP1 and/or FNIP2, regulates autophagy: following phosphorylation by ULK1, interacts with GABARAP and promotes autophagy. Required for starvation-induced perinuclear clustering of lysosomes by promoting association of RILP with its effector RAB34. Regulates glycolysis by binding to lactate dehydrogenase LDHA, acting as an uncompetitive inhibitor. The polypeptide is Folliculin (Bos taurus (Bovine)).